Here is a 181-residue protein sequence, read N- to C-terminus: Shikimate kinase 2 (181 aa).

12–17 lines the ATP pocket; it reads GCGKTT. Residues Thr16 and Asp32 each contribute to the Mg(2+) site. Substrate contacts are provided by Asp34, Arg58, and Gly79. Positions 112 to 126 are LID domain; that stretch reads EAEPEAELRPTLTGK. Arg120 is an ATP binding site. Arg139 is a binding site for substrate.

This sequence belongs to the shikimate kinase family. AroL subfamily. As to quaternary structure, monomer. It depends on Mg(2+) as a cofactor.

The protein localises to the cytoplasm. It carries out the reaction shikimate + ATP = 3-phosphoshikimate + ADP + H(+). The protein operates within metabolic intermediate biosynthesis; chorismate biosynthesis; chorismate from D-erythrose 4-phosphate and phosphoenolpyruvate: step 5/7. Its function is as follows. Catalyzes the specific phosphorylation of the 3-hydroxyl group of shikimic acid using ATP as a cosubstrate. In Salmonella schwarzengrund (strain CVM19633), this protein is Shikimate kinase 2.